Consider the following 125-residue polypeptide: Conopressin-conophysin, isoform 1 (125 aa).

The signal sequence occupies residues 1 to 22 (MQMGRPTLLPCLLLLLVLSTQA). Cys23 and Cys28 are disulfide-bonded. Position 31 is a glycine amide (Gly31). Positions 32-39 (GKRDVHMI) are excised as a propeptide. Intrachain disulfides connect Cys45/Cys85, Cys48/Cys59, Cys53/Cys75, Cys60/Cys65, Cys92/Cys112, Cys104/Cys124, and Cys113/Cys118.

It belongs to the vasopressin/oxytocin family. As to expression, expressed by the venom gland.

The protein localises to the secreted. Functionally, targets vasopressin-oxytocin related receptors. The sequence is that of Conopressin-conophysin, isoform 1 from Conus monile (Necklace cone).